Reading from the N-terminus, the 283-residue chain is Plasma membrane ascorbate-dependent reductase CYBRD1 (283 aa).

The Cytoplasmic segment spans residues 1–5 (MEGYK). The helical transmembrane segment at 6–30 (SFLAFLVSSLLLGFLGVIFTLVWVL) threads the bilayer. A Cytochrome b561 domain is found at 13 to 218 (SSLLLGFLGV…FGGLVVWMVT (206 aa)). The Extracellular portion of the chain corresponds to 31-45 (HWREGLGWDGGAAEF). The helical transmembrane segment at 46–67 (NWHPVLVTSGFIFIQGIAIIVY) threads the bilayer. Residues histidine 48, arginine 68, and lysine 77 each coordinate heme b. Over 68–76 (RLPWTWKCS) the chain is Cytoplasmic. L-ascorbate-binding residues include lysine 77 and lysine 81. A helical transmembrane segment spans residues 77 to 103 (KLLMKFIHAGLHLTALIFTIVALVAVF). Histidine 84 contributes to the heme b binding site. At 104–116 (DFHNAKNIPNMYS) the chain is on the extracellular side. Histidine 106 is a Fe(3+) binding site. Residues 113–116 (NMYS) and histidine 118 each bind heme b. A helical membrane pass occupies residues 117-142 (LHSWIGLTVVILYALQLVLGVSIYLL). Residues 143 to 149 (PFASNTL) lie on the Cytoplasmic side of the membrane. L-ascorbate is bound at residue arginine 150. The chain crosses the membrane as a helical span at residues 150-177 (RAALMPVHVYSGLFIFGTVIATALMGIT). Heme b contacts are provided by histidine 157 and glutamate 178. The Extracellular segment spans residues 178–195 (EKLIFSLKEPPYSKLPPE). Residues 196-220 (AIFVNTFGLLILVFGGLVVWMVTTP) traverse the membrane as a helical segment. Residues 221–283 (AWKRPREQGM…LDEAGQRSTM (63 aa)) lie on the Cytoplasmic side of the membrane. Lysine 223 provides a ligand contact to heme b. The segment at 234–262 (SPTVSSPDETEEGSTITDCSNTEKSDVEL) is disordered. The span at 235–253 (PTVSSPDETEEGSTITDCS) shows a compositional bias: polar residues.

Homodimer. Requires heme b as cofactor.

Its subcellular location is the cell membrane. The protein localises to the apical cell membrane. It catalyses the reaction Fe(3+)(out) + L-ascorbate(in) = monodehydro-L-ascorbate radical(in) + Fe(2+)(out) + H(+). The enzyme catalyses Cu(2+)(out) + L-ascorbate(in) = Cu(+)(out) + monodehydro-L-ascorbate radical(in) + H(+). The catalysed reaction is monodehydro-L-ascorbate radical(out) + L-ascorbate(in) = monodehydro-L-ascorbate radical(in) + L-ascorbate(out). Plasma membrane reductase that uses cytoplasmic ascorbate as an electron donor to reduce extracellular Fe(3+) into Fe(2+). It is also able to reduce extracellular monodehydro-L-ascorbate and may be involved in extracellular ascorbate regeneration. May also function as a cupric transmembrane reductase. The sequence is that of Plasma membrane ascorbate-dependent reductase CYBRD1 (cybrd1) from Xenopus laevis (African clawed frog).